The following is a 217-amino-acid chain: Somatotropin (217 aa).

The signal sequence occupies residues 1 to 26 (MMAAGPRTSLLLAFALLCLPWTQVVG). H46 contacts Zn(2+). C79 and C190 form a disulfide bridge. Position 132 is a phosphoserine (S132). A Zn(2+)-binding site is contributed by E199. C207 and C215 form a disulfide bridge.

This sequence belongs to the somatotropin/prolactin family.

Its subcellular location is the secreted. Functionally, plays an important role in growth control. Its major role in stimulating body growth is to stimulate the liver and other tissues to secrete IGF1. It stimulates both the differentiation and proliferation of myoblasts. It also stimulates amino acid uptake and protein synthesis in muscle and other tissues. This Bos mutus grunniens (Wild yak) protein is Somatotropin (GH1).